Consider the following 250-residue polypeptide: Thermostable monoacylglycerol lipase (250 aa).

Phe29 lines the substrate pocket. Ser97 functions as the Nucleophile in the catalytic mechanism. A substrate-binding site is contributed by Met98. Active-site charge relay system residues include Asp196 and His226.

Belongs to the lipase/esterase LIP3/BchO family. In terms of assembly, monomer.

The catalysed reaction is Hydrolyzes glycerol monoesters of long-chain fatty acids.. With respect to regulation, not inhibited by cholate, but slightly inhibited by triton X-100 and deoxycholate. Completely inhibited by PMSF (phenylmethylsulfonyl fluoride) at a concentration of 200 uM. In terms of biological role, hydrolyzes monoacylglycerols, with the highest activity occurring with 1-monolauroylglycerol. The protein is Thermostable monoacylglycerol lipase of Bacillus sp. (strain H-257).